The sequence spans 160 residues: Eukaryotic translation initiation factor 5A-3 (160 aa).

Residues 1–12 show a composition bias toward basic and acidic residues; sequence MSDEEHHFESKA. Residues 1 to 21 form a disordered region; it reads MSDEEHHFESKADAGASKTYP. Hypusine is present on Lys52.

It belongs to the eIF-5A family. In terms of processing, lys-52 undergoes hypusination, a unique post-translational modification that consists in the addition of a butylamino group from spermidine to lysine side chain, leading to the formation of the unusual amino acid hypusine. eIF-5As are the only known proteins to undergo this modification, which is essential for their function.

In terms of biological role, translation factor that promotes translation elongation and termination, particularly upon ribosome stalling at specific amino acid sequence contexts. Binds between the exit (E) and peptidyl (P) site of the ribosome and promotes rescue of stalled ribosome: specifically required for efficient translation of polyproline-containing peptides as well as other motifs that stall the ribosome. Acts as a ribosome quality control (RQC) cofactor by joining the RQC complex to facilitate peptidyl transfer during CAT tailing step. The sequence is that of Eukaryotic translation initiation factor 5A-3 (EIF5A3) from Solanum tuberosum (Potato).